A 147-amino-acid chain; its full sequence is 3-dehydroquinate dehydratase (147 aa).

Tyr23 serves as the catalytic Proton acceptor. Asn75, His81, and Asp88 together coordinate substrate. His101 (proton donor) is an active-site residue. Substrate is bound by residues 102-103 (LS) and Arg112.

Belongs to the type-II 3-dehydroquinase family. Homododecamer.

The catalysed reaction is 3-dehydroquinate = 3-dehydroshikimate + H2O. Its pathway is metabolic intermediate biosynthesis; chorismate biosynthesis; chorismate from D-erythrose 4-phosphate and phosphoenolpyruvate: step 3/7. Functionally, catalyzes a trans-dehydration via an enolate intermediate. The chain is 3-dehydroquinate dehydratase from Stutzerimonas stutzeri (strain A1501) (Pseudomonas stutzeri).